Reading from the N-terminus, the 332-residue chain is Putative D-threonate 4-phosphate dehydrogenase (332 aa).

Residues H140 and T141 each contribute to the substrate site. A divalent metal cation is bound by residues H170, H214, and H270. Positions 278, 287, and 296 each coordinate substrate.

Belongs to the PdxA family. PdxA2 subfamily. In terms of assembly, homodimer. It depends on a divalent metal cation as a cofactor.

It carries out the reaction 4-O-phospho-D-threonate + NAD(+) = dihydroxyacetone phosphate + CO2 + NADH. Its function is as follows. Catalyzes the NAD-dependent oxidation and subsequent decarboxylation of D-threonate 4-phosphate to produce dihydroxyacetone phosphate (DHAP). The chain is Putative D-threonate 4-phosphate dehydrogenase from Oceanobacillus iheyensis (strain DSM 14371 / CIP 107618 / JCM 11309 / KCTC 3954 / HTE831).